The following is a 139-amino-acid chain: Histone H2AX (139 aa).

Positions 1-24 (MSSTATTKGGRGKPKASKSVSRSS) are disordered. The residue at position 136 (Ser136) is a Phosphoserine; by ATM and ATR. A [ST]-Q motif motif is present at residues 136 to 137 (SQ).

This sequence belongs to the histone H2A family. In terms of assembly, the nucleosome is a histone octamer containing two molecules each of H2A, H2B, H3 and H4 assembled in one H3-H4 heterotetramer and two H2A-H2B heterodimers. The octamer wraps approximately 147 bp of DNA. Interacts with numerous proteins required for DNA damage signaling and repair when phosphorylated on Ser-136. Phosphorylated on Ser-136 (to form gamma-H2AX) in response to DNA double strand breaks (DSBs) generated by exogenous genotoxic agents and by stalled replication forks, and may also occur during meiotic recombination events. Phosphorylation can extend up to several thousand nucleosomes from the actual site of the DSB and may mark the surrounding chromatin for recruitment of proteins required for DNA damage signaling and repair. Widespread phosphorylation may also serve to amplify the damage signal or aid repair of persistent lesions. Phosphorylation of Ser-136 in response to ionizing radiation is mediated by ATM while defects in DNA replication induce Ser-136 phosphorylation subsequent to activation of ATR. Dephosphorylation of Ser-136 by PP2A is required for DNA DSB repair.

It is found in the nucleus. The protein localises to the chromosome. Functionally, variant histone H2A which replaces conventional H2A in a subset of nucleosomes. Nucleosomes wrap and compact DNA into chromatin, limiting DNA accessibility to the cellular machineries which require DNA as a template. Histones thereby play a central role in transcription regulation, DNA repair, DNA replication and chromosomal stability. DNA accessibility is regulated via a complex set of post-translational modifications of histones, also called histone code, and nucleosome remodeling. Required for checkpoint-mediated arrest of cell cycle progression in response to low doses of ionizing radiation and for efficient repair of DNA double strand breaks (DSBs) specifically when modified by C-terminal phosphorylation. This Cicer arietinum (Chickpea) protein is Histone H2AX (HIS2A).